A 66-amino-acid polypeptide reads, in one-letter code: MNWLLRKCSKCGRYTLSRDRCPYCGGELIVPHPPRFSPIDKYVEYRLEEKLSKGIIKLDEKPPYKP.

It belongs to the NOP10 family.

In terms of biological role, involved in ribosome biogenesis; more specifically in 18S rRNA pseudouridylation and in cleavage of pre-rRNA. The sequence is that of Ribosome biogenesis protein Nop10 from Desulfurococcus amylolyticus (strain DSM 18924 / JCM 16383 / VKM B-2413 / 1221n) (Desulfurococcus kamchatkensis).